The following is a 239-amino-acid chain: tRNA (guanine-N(7)-)-methyltransferase (239 aa).

E69, E94, D121, and D144 together coordinate S-adenosyl-L-methionine. The active site involves D144. Substrate contacts are provided by residues K148, D180, and 217–220; that span reads TKFE.

Belongs to the class I-like SAM-binding methyltransferase superfamily. TrmB family. In terms of assembly, monomer.

The enzyme catalyses guanosine(46) in tRNA + S-adenosyl-L-methionine = N(7)-methylguanosine(46) in tRNA + S-adenosyl-L-homocysteine. The protein operates within tRNA modification; N(7)-methylguanine-tRNA biosynthesis. Catalyzes the formation of N(7)-methylguanine at position 46 (m7G46) in tRNA. In Buchnera aphidicola subsp. Acyrthosiphon pisum (strain 5A), this protein is tRNA (guanine-N(7)-)-methyltransferase.